Here is a 555-residue protein sequence, read N- to C-terminus: MSTDESEDVYSDLYSIISQVTSNTANDIEQLPYALTFKTSLIFVGATIGGLLFGYDTGVISGVLLSLKPEDLSLVVLTDVQKELITSSTSVGSFFGSILAFPLADRYGRRITLAICCSIFILAAIGMAIARTLTFLICGRLLVGIAVGVSAQCVPLFLSEISPSRIRGFMLTLNIIAITGGQLVSYVIASLMKEIDNSWRYLFALSAIPAILFLSILDFIPESPRWSISKGDILYTRDSLRMLYPTASTYHVNSKIKQLIIELDKLRLYEDASEPLLVQSQSVIRYMDSSTSGTLSPPNIKRLSSNTERTSNTMSSSSAYLSALRGPAPNGALASNKKKRHRMEPRTIRALIVGCMLMFFQQITGFNAFMYYAAIIFSKFNIKNPLLPPILIASTNFIFTFFAMYTMDSLGRRAILLRTILIMTVGLLLCSVGFGHDQVNLLLISVVIYVAAYASAMGSVPWTCVEFLPLNRRSFGASCIACTNWLTNAFVSMTYLSTINTIGDENTMLIFAFFTVCAWFFVYFWYPEVKGLSLEEVGRVFDNGIDVHYVFRTYH.

Over 1–39 (MSTDESEDVYSDLYSIISQVTSNTANDIEQLPYALTFKT) the chain is Cytoplasmic. The chain crosses the membrane as a helical span at residues 40–60 (SLIFVGATIGGLLFGYDTGVI). Residues 61–83 (SGVLLSLKPEDLSLVVLTDVQKE) lie on the Extracellular side of the membrane. Residues 84-104 (LITSSTSVGSFFGSILAFPLA) traverse the membrane as a helical segment. The Cytoplasmic portion of the chain corresponds to 105-118 (DRYGRRITLAICCS). The helical transmembrane segment at 119–139 (IFILAAIGMAIARTLTFLICG) threads the bilayer. A topological domain (extracellular) is located at residue R140. A helical membrane pass occupies residues 141-161 (LLVGIAVGVSAQCVPLFLSEI). The Cytoplasmic segment spans residues 162-168 (SPSRIRG). The chain crosses the membrane as a helical span at residues 169–189 (FMLTLNIIAITGGQLVSYVIA). Over 190–200 (SLMKEIDNSWR) the chain is Extracellular. The chain crosses the membrane as a helical span at residues 201-221 (YLFALSAIPAILFLSILDFIP). The Cytoplasmic portion of the chain corresponds to 222 to 356 (ESPRWSISKG…TIRALIVGCM (135 aa)). Residues 289–313 (SSTSGTLSPPNIKRLSSNTERTSNT) are disordered. The helical transmembrane segment at 357–377 (LMFFQQITGFNAFMYYAAIIF) threads the bilayer. Residues 378-384 (SKFNIKN) lie on the Extracellular side of the membrane. A helical transmembrane segment spans residues 385-405 (PLLPPILIASTNFIFTFFAMY). Topologically, residues 406 to 413 (TMDSLGRR) are cytoplasmic. Residues 414–434 (AILLRTILIMTVGLLLCSVGF) form a helical membrane-spanning segment. At 435–440 (GHDQVN) the chain is on the extracellular side. A helical transmembrane segment spans residues 441–461 (LLLISVVIYVAAYASAMGSVP). Over 462–474 (WTCVEFLPLNRRS) the chain is Cytoplasmic. A helical transmembrane segment spans residues 475-497 (FGASCIACTNWLTNAFVSMTYLS). Residues 498 to 506 (TINTIGDEN) lie on the Extracellular side of the membrane. A helical transmembrane segment spans residues 507–527 (TMLIFAFFTVCAWFFVYFWYP). The Cytoplasmic segment spans residues 528-555 (EVKGLSLEEVGRVFDNGIDVHYVFRTYH).

It belongs to the major facilitator superfamily. Sugar transporter (TC 2.A.1.1) family.

Its subcellular location is the membrane. This Saccharomyces cerevisiae (strain ATCC 204508 / S288c) (Baker's yeast) protein is Probable metabolite transport protein YDR387C.